A 622-amino-acid polypeptide reads, in one-letter code: TAF6-like RNA polymerase II p300/CBP-associated factor-associated factor 65 kDa subunit 6L (622 aa).

Disordered regions lie at residues 403–430 (QESS…GPED) and 457–546 (GTGQ…TRDV). Ser495 and Ser501 each carry phosphoserine. Low complexity predominate over residues 511–522 (ASASGPAASESR). Asymmetric dimethylarginine occurs at positions 555, 561, and 593.

The protein belongs to the TAF6 family. As to quaternary structure, the PCAF complex is composed of a number of TBP-associated factors (TAFS), such as TAF5, TAF5L, TAF6, TAF6L, TAF9, TAF10 and TAF12, PCAF, and also PCAF-associated factors (PAFs), such as TADA2L/ADA2, TADA3L/ADA3 and SPT3. Component of the STAGA transcription coactivator-HAT complex, at least composed of SUPT3H, GCN5L2, TAF5L, TAF6L, SUPT7L, TADA3L, TAD1L, TAF10, TAF12, TRRAP and TAF9.

Its subcellular location is the nucleus. Functions as a component of the PCAF complex. The PCAF complex is capable of efficiently acetylating histones in a nucleosomal context. The PCAF complex could be considered as the human version of the yeast SAGA complex. With TAF5L, acts as an epigenetic regulator essential for somatic reprogramming. Regulates target genes through H3K9ac deposition and MYC recruitment which trigger MYC regulatory network to orchestrate gene expression programs to control embryonic stem cell state. Functions with MYC to activate target gene expression through RNA polymerase II pause release. This is TAF6-like RNA polymerase II p300/CBP-associated factor-associated factor 65 kDa subunit 6L from Homo sapiens (Human).